The chain runs to 329 residues: Holliday junction branch migration complex subunit RuvB (329 aa).

A large ATPase domain (RuvB-L) region spans residues 1 to 180 (MKNILQSTEC…FGIPIHLEFY (180 aa)). Residues arginine 20, glycine 61, lysine 64, threonine 65, threonine 66, 127-129 (EDF), arginine 170, tyrosine 180, and arginine 217 contribute to the ATP site. Position 65 (threonine 65) interacts with Mg(2+). The tract at residues 181–252 (STEELTKVIQ…FADKALLRLG (72 aa)) is small ATPAse domain (RuvB-S). The segment at 255–329 (KLGLDRQDIQ…ISHLREQEYI (75 aa)) is head domain (RuvB-H). DNA-binding residues include arginine 308 and arginine 313.

This sequence belongs to the RuvB family. Homohexamer. Forms an RuvA(8)-RuvB(12)-Holliday junction (HJ) complex. HJ DNA is sandwiched between 2 RuvA tetramers; dsDNA enters through RuvA and exits via RuvB. An RuvB hexamer assembles on each DNA strand where it exits the tetramer. Each RuvB hexamer is contacted by two RuvA subunits (via domain III) on 2 adjacent RuvB subunits; this complex drives branch migration. In the full resolvosome a probable DNA-RuvA(4)-RuvB(12)-RuvC(2) complex forms which resolves the HJ.

It is found in the cytoplasm. The enzyme catalyses ATP + H2O = ADP + phosphate + H(+). Its function is as follows. The RuvA-RuvB-RuvC complex processes Holliday junction (HJ) DNA during genetic recombination and DNA repair, while the RuvA-RuvB complex plays an important role in the rescue of blocked DNA replication forks via replication fork reversal (RFR). RuvA specifically binds to HJ cruciform DNA, conferring on it an open structure. The RuvB hexamer acts as an ATP-dependent pump, pulling dsDNA into and through the RuvAB complex. RuvB forms 2 homohexamers on either side of HJ DNA bound by 1 or 2 RuvA tetramers; 4 subunits per hexamer contact DNA at a time. Coordinated motions by a converter formed by DNA-disengaged RuvB subunits stimulates ATP hydrolysis and nucleotide exchange. Immobilization of the converter enables RuvB to convert the ATP-contained energy into a lever motion, pulling 2 nucleotides of DNA out of the RuvA tetramer per ATP hydrolyzed, thus driving DNA branch migration. The RuvB motors rotate together with the DNA substrate, which together with the progressing nucleotide cycle form the mechanistic basis for DNA recombination by continuous HJ branch migration. Branch migration allows RuvC to scan DNA until it finds its consensus sequence, where it cleaves and resolves cruciform DNA. The protein is Holliday junction branch migration complex subunit RuvB of Ehrlichia chaffeensis (strain ATCC CRL-10679 / Arkansas).